The following is a 492-amino-acid chain: BTB/POZ domain and ankyrin repeat-containing protein NOOT2 (492 aa).

Positions 25–107 constitute a BTB domain; sequence SDVTFQVEGR…LYSGQVSIVP (83 aa). A C2HC NPR-type zinc finger spans residues 113–127; that stretch reads RPNCGERGCWHTHCT. Residues Cys-116, Cys-121, His-123, and Cys-126 each contribute to the Zn(2+) site. ANK repeat units follow at residues 248–277, 278–307, 312–341, and 345–379; these read QKIRRMRRALDSSDVELVKLMVMGEGLNLD, EALALHYAVENCSREVVKALLELGAADVNY, AGKTSLHVAAEMVSPEMVAVLLDHHADPTV, and DGVTPLDILRTLTSDFLFKGAVPGLNHIEPNKLRL. Disordered stretches follow at residues 395-439 and 455-492; these read ENNA…NSIG and TQMGGDDDNRHNNSHREAMNRQGGHGCDPSMYHHSHDF. Low complexity-rich tracts occupy residues 397 to 413 and 425 to 439; these read NASNNNNNNNNASSSAA and SSSSGNNNNNNNSIG. A compositionally biased stretch (basic and acidic residues) spans 461-473; sequence DDNRHNNSHREAM.

Belongs to the plant 'ANKYRIN-BTB/POZ' family. 'NOOT-BOP-COCH-like' (NBCL) subfamily. As to quaternary structure, homodimer.

It localises to the nucleus. The protein localises to the cytoplasm. Its subcellular location is the cell membrane. It functions in the pathway protein modification; protein ubiquitination. Its function is as follows. May act as a substrate-specific adapter of an E3 ubiquitin-protein ligase complex (CUL3-RBX1-BTB) which mediates the ubiquitination and subsequent proteasomal degradation of target proteins. Transcriptional co-regulator involved in the promotion of leaf and floral meristem fate and determinacy. Required for the abscission of senescent organs, probably by regulating the cell wall disorganization in abscission zones (AZs, e.g. pulvini at the base of leaves). Involved in the coordination of the symbiotic nodule developmental program; promotes the formation of root nodules by interacting directly with APP1 to modulate the expression of the nuclear transcription factor Y subunit (NF-YA1), a key nodulin. Involved in the regulation of indeterminate nodule identity in association with NOOT1. The polypeptide is BTB/POZ domain and ankyrin repeat-containing protein NOOT2 (Medicago truncatula (Barrel medic)).